The chain runs to 109 residues: MANIKSAKKRAIQSEKRRKHNASRRSMVRTFIKKVYAAISSGDKKAAETAFAQMQPIIDRHACKGLIHKNKAARHKSNLTAQINAMSEDSLLKKRRSEGCEFKAPEKPV.

Positions 1-26 (MANIKSAKKRAIQSEKRRKHNASRRS) are disordered.

This sequence belongs to the bacterial ribosomal protein bS20 family.

Binds directly to 16S ribosomal RNA. The polypeptide is Small ribosomal subunit protein bS20 (Hamiltonella defensa subsp. Acyrthosiphon pisum (strain 5AT)).